A 320-amino-acid polypeptide reads, in one-letter code: D-alanine--D-alanine ligase (320 aa).

The ATP-grasp domain maps to 120–314 (SSWFFANSIN…FTNLIAEIIK (195 aa)). 147–198 (MKRPYVIKPLTQGSSIGVEVIFEEDDFNFADYDFPYGDQVVIERYIKGREFQ) contacts ATP. 3 residues coordinate Mg(2+): glutamate 267, glutamate 281, and asparagine 283.

The protein belongs to the D-alanine--D-alanine ligase family. Mg(2+) is required as a cofactor. Mn(2+) serves as cofactor.

Its subcellular location is the cytoplasm. It catalyses the reaction 2 D-alanine + ATP = D-alanyl-D-alanine + ADP + phosphate + H(+). It participates in cell wall biogenesis; peptidoglycan biosynthesis. Its function is as follows. Cell wall formation. This chain is D-alanine--D-alanine ligase, found in Rickettsia akari (strain Hartford).